The sequence spans 130 residues: Small ribosomal subunit protein uS8 (130 aa).

It belongs to the universal ribosomal protein uS8 family. Part of the 30S ribosomal subunit. Contacts proteins S5 and S12.

Functionally, one of the primary rRNA binding proteins, it binds directly to 16S rRNA central domain where it helps coordinate assembly of the platform of the 30S subunit. The protein is Small ribosomal subunit protein uS8 of Pseudomonas putida (strain ATCC 700007 / DSM 6899 / JCM 31910 / BCRC 17059 / LMG 24140 / F1).